The chain runs to 356 residues: UDP-N-acetylglucosamine--N-acetylmuramyl-(pentapeptide) pyrophosphoryl-undecaprenol N-acetylglucosamine transferase (356 aa).

UDP-N-acetyl-alpha-D-glucosamine contacts are provided by residues 11 to 13, N122, S186, and Q287; that span reads TGG.

Belongs to the glycosyltransferase 28 family. MurG subfamily.

It localises to the cell inner membrane. It carries out the reaction di-trans,octa-cis-undecaprenyl diphospho-N-acetyl-alpha-D-muramoyl-L-alanyl-D-glutamyl-meso-2,6-diaminopimeloyl-D-alanyl-D-alanine + UDP-N-acetyl-alpha-D-glucosamine = di-trans,octa-cis-undecaprenyl diphospho-[N-acetyl-alpha-D-glucosaminyl-(1-&gt;4)]-N-acetyl-alpha-D-muramoyl-L-alanyl-D-glutamyl-meso-2,6-diaminopimeloyl-D-alanyl-D-alanine + UDP + H(+). Its pathway is cell wall biogenesis; peptidoglycan biosynthesis. Cell wall formation. Catalyzes the transfer of a GlcNAc subunit on undecaprenyl-pyrophosphoryl-MurNAc-pentapeptide (lipid intermediate I) to form undecaprenyl-pyrophosphoryl-MurNAc-(pentapeptide)GlcNAc (lipid intermediate II). The polypeptide is UDP-N-acetylglucosamine--N-acetylmuramyl-(pentapeptide) pyrophosphoryl-undecaprenol N-acetylglucosamine transferase (Anaplasma marginale (strain St. Maries)).